The chain runs to 139 residues: Trafficking protein particle complex subunit 2-like protein (139 aa).

The protein belongs to the TRAPP small subunits family. Sedlin subfamily. Component of the multisubunit TRAPP (transport protein particle) complex, which includes at least TRAPPC2, TRAPPC2L, TRAPPC3, TRAPPC3L, TRAPPC4, TRAPPC5, TRAPPC8, TRAPPC9, TRAPPC10, TRAPPC11 and TRAPPC12. Interacts with the heterodimer TRAPPC3-TRAPPC6A.

The protein localises to the cytoplasm. It is found in the perinuclear region. It localises to the endoplasmic reticulum. The protein resides in the golgi apparatus. Its function is as follows. May play a role in vesicular transport from endoplasmic reticulum to Golgi. The sequence is that of Trafficking protein particle complex subunit 2-like protein (TRAPPC2L) from Bos taurus (Bovine).